Consider the following 379-residue polypeptide: Glucose-1-phosphate adenylyltransferase (379 aa).

Residues Gly164, 179 to 180 (EK), and Ser190 each bind alpha-D-glucose 1-phosphate.

The protein belongs to the bacterial/plant glucose-1-phosphate adenylyltransferase family. Homotetramer.

It catalyses the reaction alpha-D-glucose 1-phosphate + ATP + H(+) = ADP-alpha-D-glucose + diphosphate. Its pathway is glycan biosynthesis; glycogen biosynthesis. In terms of biological role, involved in the biosynthesis of ADP-glucose, a building block required for the elongation reactions to produce glycogen. Catalyzes the reaction between ATP and alpha-D-glucose 1-phosphate (G1P) to produce pyrophosphate and ADP-Glc. The protein is Glucose-1-phosphate adenylyltransferase of Streptococcus equi subsp. zooepidemicus (strain H70).